A 146-amino-acid chain; its full sequence is D-aminoacyl-tRNA deacylase (146 aa).

Residues Gly137–Pro138 carry the Gly-cisPro motif, important for rejection of L-amino acids motif.

This sequence belongs to the DTD family. In terms of assembly, homodimer.

The protein resides in the cytoplasm. It catalyses the reaction glycyl-tRNA(Ala) + H2O = tRNA(Ala) + glycine + H(+). The catalysed reaction is a D-aminoacyl-tRNA + H2O = a tRNA + a D-alpha-amino acid + H(+). Functionally, an aminoacyl-tRNA editing enzyme that deacylates mischarged D-aminoacyl-tRNAs. Also deacylates mischarged glycyl-tRNA(Ala), protecting cells against glycine mischarging by AlaRS. Acts via tRNA-based rather than protein-based catalysis; rejects L-amino acids rather than detecting D-amino acids in the active site. By recycling D-aminoacyl-tRNA to D-amino acids and free tRNA molecules, this enzyme counteracts the toxicity associated with the formation of D-aminoacyl-tRNA entities in vivo and helps enforce protein L-homochirality. This chain is D-aminoacyl-tRNA deacylase, found in Cellvibrio japonicus (strain Ueda107) (Pseudomonas fluorescens subsp. cellulosa).